We begin with the raw amino-acid sequence, 556 residues long: Formate--tetrahydrofolate ligase (556 aa).

65–72 (TPAGEGKS) contributes to the ATP binding site.

This sequence belongs to the formate--tetrahydrofolate ligase family.

The enzyme catalyses (6S)-5,6,7,8-tetrahydrofolate + formate + ATP = (6R)-10-formyltetrahydrofolate + ADP + phosphate. The protein operates within one-carbon metabolism; tetrahydrofolate interconversion. In Streptococcus suis (strain 98HAH33), this protein is Formate--tetrahydrofolate ligase.